A 552-amino-acid chain; its full sequence is Arginine--tRNA ligase (552 aa).

A 'HIGH' region motif is present at residues 123–133 (ANPTGPLTIGR).

Belongs to the class-I aminoacyl-tRNA synthetase family. Monomer.

The protein localises to the cytoplasm. The catalysed reaction is tRNA(Arg) + L-arginine + ATP = L-arginyl-tRNA(Arg) + AMP + diphosphate. This chain is Arginine--tRNA ligase, found in Pelodictyon phaeoclathratiforme (strain DSM 5477 / BU-1).